Consider the following 863-residue polypeptide: Autotaxin (863 aa).

Residues 1–27 (MARRSSFQSCQIISLFTFAVGVNICLG) form the signal peptide. The propeptide at 28–35 (FTAHRIKR) is removed by furin. Residue Asn-54 is glycosylated (N-linked (GlcNAc...) asparagine). 2 consecutive SMB domains span residues 55–98 (ISGS…LKTA) and 99–143 (RGWE…GESH). 10 cysteine pairs are disulfide-bonded: Cys-59-Cys-76, Cys-63-Cys-94, Cys-74-Cys-87, Cys-80-Cys-86, Cys-103-Cys-120, Cys-108-Cys-138, Cys-118-Cys-131, Cys-124-Cys-130, Cys-149-Cys-195, and Cys-157-Cys-351. The Cell attachment site motif lies at 127 to 129 (RGD). The tract at residues 145 to 502 (VDDDCEEIKA…STFKYKTKVP (358 aa)) is phosphodiesterase. Residues Asp-172 and Thr-210 each coordinate Zn(2+). Thr-210 (nucleophile) is an active-site residue. Positions 210, 231, and 312 each coordinate 1-(9Z-octadecenoyl)-sn-glycero-3-phosphate. 3 residues coordinate 1-hexadecanoyl-sn-glycero-3-phosphate: Thr-210, Asn-231, and Asp-312. Thr-210, Asn-231, and Asp-312 together coordinate 1-tetradecanoyl-sn-glycerol 3-phosphate. Asp-312, His-316, Asp-359, and His-360 together coordinate Zn(2+). 5 disulfide bridges follow: Cys-367-Cys-469, Cys-414-Cys-806, Cys-567-Cys-667, Cys-569-Cys-652, and Cys-775-Cys-785. N-linked (GlcNAc...) asparagine glycosylation is present at Asn-411. His-475 lines the Zn(2+) pocket. Position 475 (His-475) interacts with 1-(9Z-octadecenoyl)-sn-glycero-3-phosphate. His-475 serves as a coordination point for 1-hexadecanoyl-sn-glycero-3-phosphate. A 1-tetradecanoyl-sn-glycerol 3-phosphate-binding site is contributed by His-475. N-linked (GlcNAc...) asparagine glycosylation is present at Asn-525. Residues 598 to 863 (LYGRPAVLYR…TYLHTYESEI (266 aa)) are nuclease-like domain. Ca(2+)-binding residues include Asp-740, Asp-742, Asp-744, Leu-746, and Asp-748. Residue Asn-807 is glycosylated (N-linked (GlcNAc...) asparagine). The tract at residues 830-851 (IEHLTSLDFFRKTSRSYPEILT) is required for secretion.

This sequence belongs to the nucleotide pyrophosphatase/phosphodiesterase family. Requires Zn(2+) as cofactor. The cofactor is Ca(2+). Post-translationally, N-glycosylation, but not furin-cleavage, plays a critical role on secretion and on lysoPLD activity. In terms of processing, the interdomain disulfide bond between Cys-414 and Cys-806 is essential for catalytic activity. As to expression, detected in blood plasma (at protein level). Predominantly expressed in brain, placenta, ovary, and small intestine. Expressed in a number of carcinomas such as hepatocellular and prostate carcinoma, neuroblastoma and non-small-cell lung cancer. Expressed in body fluids such as plasma, cerebral spinal fluid (CSF), saliva, follicular and amniotic fluids. Not detected in leukocytes. Isoform 1 is more highly expressed in peripheral tissues than in the central nervous system (CNS). Adipocytes only express isoform 1. Isoform 3 is more highly expressed in the brain than in peripheral tissues.

The protein resides in the secreted. The catalysed reaction is a 1-O-alkyl-sn-glycero-3-phosphoethanolamine + H2O = a 1-O-alkyl-sn-glycero-3-phosphate + ethanolamine + H(+). It catalyses the reaction a 1-acyl-sn-glycero-3-phosphoethanolamine + H2O = a 1-acyl-sn-glycero-3-phosphate + ethanolamine + H(+). It carries out the reaction 1-(9Z-octadecenoyl)-sn-glycero-3-phosphoethanolamine + H2O = 1-(9Z-octadecenoyl)-sn-glycero-3-phosphate + ethanolamine + H(+). The enzyme catalyses a 1-O-alkyl-sn-glycero-3-phosphocholine + H2O = a 1-O-alkyl-sn-glycero-3-phosphate + choline + H(+). The catalysed reaction is 1-O-(9Z-octadecenyl)-sn-glycero-3-phosphocholine + H2O = 1-O-(9Z-octadecenyl)-sn-glycero-3-phosphate + choline + H(+). It catalyses the reaction 1-O-hexadecyl-sn-glycero-3-phosphocholine + H2O = 1-O-hexadecyl-sn-glycero-3-phosphate + choline + H(+). It carries out the reaction a 1-O-(1Z-alkenyl)-sn-glycero-3-phosphocholine + H2O = a 1-O-(1Z-alkenyl)-sn-glycero-3-phosphate + choline + H(+). The enzyme catalyses a 1-acyl-sn-glycero-3-phosphocholine + H2O = a 1-acyl-sn-glycero-3-phosphate + choline + H(+). The catalysed reaction is 1-dodecanoyl-sn-glycero-3-phosphocholine + H2O = 1-dodecanoyl-sn-glycerol 3-phosphate + choline + H(+). It catalyses the reaction 1-(9Z-octadecenoyl)-sn-glycero-3-phosphocholine + H2O = 1-(9Z-octadecenoyl)-sn-glycero-3-phosphate + choline + H(+). It carries out the reaction 1-tetradecanoyl-sn-glycero-3-phosphocholine + H2O = 1-tetradecanoyl-sn-glycerol 3-phosphate + choline + H(+). The enzyme catalyses 1-decanoyl-sn-glycero-3-phosphocholine + H2O = 1-decanoyl-sn-glycero-3-phosphate + choline + H(+). The catalysed reaction is 1-octadecanoyl-sn-glycero-3-phosphocholine + H2O = 1-octadecanoyl-sn-glycero-3-phosphate + choline + H(+). It catalyses the reaction 1-hexadecanoyl-sn-glycero-3-phosphocholine + H2O = 1-hexadecanoyl-sn-glycero-3-phosphate + choline + H(+). It carries out the reaction 1-hexanoyl-sn-glycero-3-phosphocholine + H2O = 1-hexanoyl-sn-glycero-3-phosphate + choline + H(+). The enzyme catalyses 1-(9Z,12Z)-octadecadienoyl-sn-glycero-3-phosphocholine + H2O = 1-(9Z,12Z)-octadecadienoyl-sn-glycero-3-phosphate + choline + H(+). The catalysed reaction is sphing-4-enine-phosphocholine + H2O = sphing-4-enine 1-phosphate + choline + H(+). It catalyses the reaction 1-(5Z,8Z,11Z,14Z-eicosatetraenoyl)-sn-glycero-3-phosphocholine + H2O = 1-(5Z,8Z,11Z,14Z-eicosatetraenoyl)-sn-glycero-3-phosphate + choline + H(+). It carries out the reaction a 2-acyl-sn-glycero-3-phosphocholine + H2O = a 2-acyl-sn-glycerol 3-phosphate + choline + H(+). The enzyme catalyses a 1,2-diacyl-sn-glycero-3-phosphocholine + H2O = a 1,2-diacyl-sn-glycero-3-phosphate + choline + H(+). The catalysed reaction is 1,2-dioctanoyl-sn-glycero-3-phosphocholine + H2O = 1,2-dioctanoyl-sn-glycero-3-phosphate + choline + H(+). It catalyses the reaction 1,2-didecanoyl-sn-glycero-3-phosphocholine + H2O = 1,2-didecanoyl-sn-glycero-3-phosphate + choline + H(+). It carries out the reaction a 1-acyl-sn-glycero-3-phospho-L-serine + H2O = a 1-acyl-sn-glycero-3-phosphate + L-serine + H(+). The enzyme catalyses 1-(9Z-octadecenoyl)-sn-glycero-3-phospho-L-serine + H2O = 1-(9Z-octadecenoyl)-sn-glycero-3-phosphate + L-serine + H(+). The catalysed reaction is a 2-acyl-sn-glycero-3-phospho-L-serine + H2O = a 2-acyl-sn-glycerol 3-phosphate + L-serine + H(+). With respect to regulation, inhibited by lysophosphatidic acid (LPA) and sphingosine-1-phosphate (S1P). Inhibited by EDTA and EGTA. Its function is as follows. Secreted lysophospholipase D that hydrolyzes lysophospholipids to produce the signaling molecule lysophosphatidic acid (LPA) in extracellular fluids. Its major substrate is lysophosphatidylcholine. Can also act on sphingosylphosphorylcholine producing sphingosine-1-phosphate, a modulator of cell motility. Can hydrolyze, in vitro, bis-pNPP, to some extent pNP-TMP, and barely ATP. Involved in several motility-related processes such as angiogenesis and neurite outgrowth. Acts as an angiogenic factor by stimulating migration of smooth muscle cells and microtubule formation. Stimulates migration of melanoma cells, probably via a pertussis toxin-sensitive G protein. May have a role in induction of parturition. Possible involvement in cell proliferation and adipose tissue development. Required for LPA production in activated platelets, cleaves the sn-1 lysophospholipids to generate sn-1 lysophosphatidic acids containing predominantly 18:2 and 20:4 fatty acids. Shows a preference for the sn-1 to the sn-2 isomer of 1-O-alkyl-sn-glycero-3-phosphocholine (lyso-PAF). This chain is Autotaxin, found in Homo sapiens (Human).